Here is a 496-residue protein sequence, read N- to C-terminus: Probable E3 ubiquitin-protein ligase XBOS32 (496 aa).

5 ANK repeats span residues 50–79, 83–112, 117–147, 180–209, and 223–252; these read GRNS…EINL, RGQT…NVHR, NGGS…SMPN, GGLT…SVIE, and AGST…SLSA. The RING-type zinc-finger motif lies at 321–368; that stretch reads CAVCLEGSCSVAAEGCKHEFCTRCALYLCSTSYTSVSPAGAIPCPLCR.

The catalysed reaction is S-ubiquitinyl-[E2 ubiquitin-conjugating enzyme]-L-cysteine + [acceptor protein]-L-lysine = [E2 ubiquitin-conjugating enzyme]-L-cysteine + N(6)-ubiquitinyl-[acceptor protein]-L-lysine.. Its pathway is protein modification; protein ubiquitination. The chain is Probable E3 ubiquitin-protein ligase XBOS32 (XBOS32) from Oryza sativa subsp. japonica (Rice).